The following is a 337-amino-acid chain: Protein RecA (337 aa).

66 to 73 (GPESSGKT) is a binding site for ATP.

This sequence belongs to the RecA family.

The protein resides in the cytoplasm. In terms of biological role, can catalyze the hydrolysis of ATP in the presence of single-stranded DNA, the ATP-dependent uptake of single-stranded DNA by duplex DNA, and the ATP-dependent hybridization of homologous single-stranded DNAs. It interacts with LexA causing its activation and leading to its autocatalytic cleavage. This chain is Protein RecA, found in Mesomycoplasma hyopneumoniae (strain J / ATCC 25934 / NCTC 10110) (Mycoplasma hyopneumoniae).